The following is a 79-amino-acid chain: Small integral membrane protein 40 (79 aa).

A helical membrane pass occupies residues 35 to 55 (FFIFLALFLTLLMLEAAYKLL).

The protein resides in the membrane. The sequence is that of Small integral membrane protein 40 from Homo sapiens (Human).